A 103-amino-acid chain; its full sequence is Small ribosomal subunit protein uS10 (103 aa).

This sequence belongs to the universal ribosomal protein uS10 family. Part of the 30S ribosomal subunit.

Its function is as follows. Involved in the binding of tRNA to the ribosomes. This Azoarcus sp. (strain BH72) protein is Small ribosomal subunit protein uS10.